The sequence spans 192 residues: MVRAGAVGTHLPTSSLDIFGDLRKMNKRQLYYQVLNFAMIVSSALMIWKGLIVLTGSESPIVVVLSGSMEPAFHRGDLLFLTNFREDPIRAGEIVVFKVEGRDIPIVHRVIKVHEKDNGDIKFLTKGDNNEVDDRGLYKEGQNWLEKKDVVGRARGFLPYVGMVTIIMNDYPKFKYALVAVMGAYVLLKRES.

Residues 1 to 28 (MVRAGAVGTHLPTSSLDIFGDLRKMNKR) are Cytoplasmic-facing. Residues 29 to 48 (QLYYQVLNFAMIVSSALMIW) traverse the membrane as a helical; Signal-anchor for type II membrane protein segment. At 49 to 192 (KGLIVLTGSE…GAYVLLKRES (144 aa)) the chain is on the lumenal side. Catalysis depends on charge relay system residues serine 68, histidine 108, and aspartate 134. The tract at residues 177 to 188 (ALVAVMGAYVLL) is C-terminal short (CTS) helix.

It belongs to the peptidase S26B family. As to quaternary structure, component of the signal peptidase complex paralog C (SPC-C) composed of a catalytic subunit SEC11C and three accessory subunits SPCS1, SPCS2 and SPCS3. Within the complex, interacts with SPCS2 and SPCS3. The complex induces a local thinning of the ER membrane which is used to measure the length of the signal peptide (SP) h-region of protein substrates. This ensures the selectivity of the complex towards h-regions shorter than 18-20 amino acids. In terms of processing, may undergo processing at the N-terminus.

It localises to the endoplasmic reticulum membrane. The enzyme catalyses Cleavage of hydrophobic, N-terminal signal or leader sequences from secreted and periplasmic proteins.. Catalytic component of the signal peptidase complex (SPC) which catalyzes the cleavage of N-terminal signal sequences from nascent proteins as they are translocated into the lumen of the endoplasmic reticulum. Specifically cleaves N-terminal signal peptides that contain a hydrophobic alpha-helix (h-region) shorter than 18-20 amino acids. This Rattus norvegicus (Rat) protein is Signal peptidase complex catalytic subunit SEC11C (Sec11c).